Here is a 535-residue protein sequence, read N- to C-terminus: SRMLTDPPRIGSMQSLGSSPTGPLVFVSSSPQLSPFLHPPGHHGLPSQSYYLETSSTPLYRSSVVTNQLSASEEKLCITSNRQQSYAAAGSGVRVFEMANETRYCAVCSDFASGYHYGFWSCEGCKAFFKRSIQGHNDYMCPATNQCTMDRNRRKSCQACRLRKCYEVGMVKGGLRKDRGGRVLRKDKRYCGPAGDREKPYGDLEHRTAPPQDGGRNSSSSSLSGGGGWCGPRITMPPEQVLFLLQGAEPPALCSRQKVARPYTEVTMMTLLTSMADKELVHMIAWAKKVPGFQELSLHDQVQLLESSWLEVLMIGLIWRSIHCPGKLIFAQDLILDRSEGDCVEGMAEIFDMLLATVSRFRMLKLKPEEFVCLKAIILLNSGAFSFCSNSVESLHNSSAVESMLDNITDALIHHISHSGASVQQQPRRQVQLLLLLSHIRHMSNKGMEHLYSIKCKNKVPLYDLLLEMLDGHRLQSPGKVAQAGEQTEGPSTTTTTSTGSSIGPMRGSQDTHIRSPGSGVLQYGSPSSDQMPIP.

The segment at serine 1–threonine 21 is disordered. The segment at serine 1 to tyrosine 104 is modulating. A compositionally biased stretch (polar residues) spans serine 12 to threonine 21. 2 consecutive NR C4-type zinc fingers follow at residues cysteine 105–cysteine 125 and cysteine 141–cysteine 165. Residues cysteine 105 to methionine 170 constitute a DNA-binding region (nuclear receptor). Residues valine 171–methionine 236 are hinge. The segment at aspartate 187–tryptophan 229 is disordered. Over residues glycine 195 to threonine 208 the composition is skewed to basic and acidic residues. Positions glycine 214–leucine 223 are enriched in low complexity. One can recognise an NR LBD domain in the interval proline 237–histidine 473. Positions proline 478–proline 535 are disordered. Residues serine 492–serine 502 are compositionally biased toward low complexity. Residues glycine 525 to proline 535 show a composition bias toward polar residues.

It belongs to the nuclear hormone receptor family. NR3 subfamily. Binds DNA as a homodimer. Can form a heterodimer with ER-beta. Highest expression in brain and liver.

The protein resides in the nucleus. Its function is as follows. The steroid hormones and their receptors are involved in the regulation of eukaryotic gene expression and affect cellular proliferation and differentiation in target tissues. The protein is Estrogen receptor (esr1) of Salmo salar (Atlantic salmon).